The following is a 118-amino-acid chain: Small ribosomal subunit protein uS13 (118 aa).

Positions 91 to 118 are disordered; the sequence is HRRGLPVRGQRTKTNARTRKGPRKPIKK.

It belongs to the universal ribosomal protein uS13 family. In terms of assembly, part of the 30S ribosomal subunit. Forms a loose heterodimer with protein S19. Forms two bridges to the 50S subunit in the 70S ribosome.

Its function is as follows. Located at the top of the head of the 30S subunit, it contacts several helices of the 16S rRNA. In the 70S ribosome it contacts the 23S rRNA (bridge B1a) and protein L5 of the 50S subunit (bridge B1b), connecting the 2 subunits; these bridges are implicated in subunit movement. Contacts the tRNAs in the A and P-sites. This Sodalis glossinidius (strain morsitans) protein is Small ribosomal subunit protein uS13.